Reading from the N-terminus, the 369-residue chain is Glutamate 5-kinase (369 aa).

K7 lines the ATP pocket. Positions 48, 135, and 147 each coordinate substrate. ATP contacts are provided by residues 167–168 and 208–214; these read TD and SGGMASK. In terms of domain architecture, PUA spans 275–353; it reads AGALHLDEGA…HEIAALLGIE (79 aa).

Belongs to the glutamate 5-kinase family.

The protein localises to the cytoplasm. The catalysed reaction is L-glutamate + ATP = L-glutamyl 5-phosphate + ADP. It functions in the pathway amino-acid biosynthesis; L-proline biosynthesis; L-glutamate 5-semialdehyde from L-glutamate: step 1/2. Catalyzes the transfer of a phosphate group to glutamate to form L-glutamate 5-phosphate. The sequence is that of Glutamate 5-kinase from Gloeobacter violaceus (strain ATCC 29082 / PCC 7421).